We begin with the raw amino-acid sequence, 202 residues long: LexA repressor 1 (202 aa).

Positions 28–48 (RAEIAQELGFKSPNAAEEHLK) form a DNA-binding region, H-T-H motif. Catalysis depends on for autocatalytic cleavage activity residues Ser123 and Lys160.

The protein belongs to the peptidase S24 family. In terms of assembly, homodimer.

It carries out the reaction Hydrolysis of Ala-|-Gly bond in repressor LexA.. Functionally, represses a number of genes involved in the response to DNA damage (SOS response), including recA and lexA. In the presence of single-stranded DNA, RecA interacts with LexA causing an autocatalytic cleavage which disrupts the DNA-binding part of LexA, leading to derepression of the SOS regulon and eventually DNA repair. This chain is LexA repressor 1, found in Pseudomonas syringae pv. tomato (strain ATCC BAA-871 / DC3000).